The chain runs to 734 residues: Alpha-catulin (734 aa).

Ser374 and Ser538 each carry phosphoserine.

Belongs to the vinculin/alpha-catenin family. In terms of assembly, interacts with ARHGEF1. Interacts with DTNA. The interaction is required for correct localization of both CTNL1 and DTNA. Widely expressed. Expressed at lower level in neural tissues and at the highest level in the adrenal gland.

The protein localises to the cytoplasm. It localises to the cytoskeleton. Its subcellular location is the cell membrane. In terms of biological role, may modulate the Rho pathway signaling by providing a scaffold for the Lbc Rho guanine nucleotide exchange factor (ARHGEF1). This chain is Alpha-catulin (CTNNAL1), found in Homo sapiens (Human).